A 128-amino-acid polypeptide reads, in one-letter code: Putative esterase aq_1494 (128 aa).

Residue Asp-15 is part of the active site.

It belongs to the 4-hydroxybenzoyl-CoA thioesterase family.

The sequence is that of Putative esterase aq_1494 from Aquifex aeolicus (strain VF5).